The chain runs to 7760 residues: Malpinin synthetase (7760 aa).

2 disordered regions span residues 42 to 115 (ENPE…VNEK) and 161 to 180 (LDLP…GDRV). Positions 65-79 (TPRSASPLSSYTGSP) are enriched in polar residues. The tract at residues 87–389 (TELSRTLSGD…LSLDERTFLL (303 aa)) is condensation 1. Residues 164–180 (PTDRPRPSHPSFEGDRV) are compositionally biased toward basic and acidic residues. The adenylation 1 stretch occupies residues 409-813 (FEQQAERRPH…GRNDHQVKIR (405 aa)). In terms of domain architecture, Carrier 1 spans 926 to 1000 (PPQGELETAI…AFAHAIGQHR (75 aa)). Residue S961 is modified to O-(pantetheine 4'-phosphoryl)serine. Residues 1046-1477 (QDIYALAPLQ…VLPADERKLL (432 aa)) are dual epimerase/condensation (E/C) domain 1. The segment at 1498–1893 (FEQYADRVPN…GRTDYQVKIR (396 aa)) is adenylation 2. The region spanning 2003–2077 (APEGEVENAI…ALAQSIGEHR (75 aa)) is the Carrier 2 domain. S2038 carries the O-(pantetheine 4'-phosphoryl)serine modification. The interval 2099–2558 (PLIDLNQNDI…LPTEERQLLT (460 aa)) is dual epimerase/condensation (E/C) domain 2. Residues 2578 to 2973 (FEQHVDRAPD…GRADFQVKIR (396 aa)) form an adenylation 3 region. The region spanning 3083 to 3157 (APQGAVEAAI…ALAQSIGEHR (75 aa)) is the Carrier 3 domain. O-(pantetheine 4'-phosphoryl)serine is present on S3118. The segment at 3203–3634 (QDIYALAPLQ…HLNVLPAEER (432 aa)) is dual epimerase/condensation (E/C) domain 3. Positions 3658-4057 (FEQQAERTPD…GRNDDQIKIR (400 aa)) are adenylation 4. The Carrier 4 domain maps to 4174 to 4248 (APQGEVETAL…AFASRVQEQL (75 aa)). S4209 carries the O-(pantetheine 4'-phosphoryl)serine modification. The segment at 4267–4705 (LPLSFAQQRL…AAEILSQDER (439 aa)) is condensation 2. Residues 4729-5133 (FEQRVESTPD…GRNDHQVKIR (405 aa)) form an adenylation 5 region. One can recognise a Carrier 5 domain in the interval 5250-5324 (APEGEVETAI…VFAASIGHHQ (75 aa)). O-(pantetheine 4'-phosphoryl)serine is present on S5285. Positions 5370–5804 (QDIYSLSPLQ…VLPAEERTLL (435 aa)) are dual dehydration/condensation (C*) domain. Residues 5825–6224 (FEQQSERTPE…GRNDDQVKIR (400 aa)) are adenylation 6. The Carrier 6 domain maps to 6338–6412 (APQGEVETAL…ALAQSIGQHH (75 aa)). S6373 carries the O-(pantetheine 4'-phosphoryl)serine modification. Residues 6458 to 6890 (QDIYALSPLQ…QLDTVPAEEH (433 aa)) are dual epimerase/condensation (E/C) domain 4. Positions 6914 to 7300 (FEHQVERTPA…KFLPDGNVVC (387 aa)) are adenylation 7. The Carrier 7 domain maps to 7428–7503 (EPRGAIENIL…ELAPRLLATG (76 aa)). S7463 carries the post-translational modification O-(pantetheine 4'-phosphoryl)serine. Residues 7561–7722 (DNGNMASSLD…KPYVQGSIEV (162 aa)) form a thioesterase (TE) domain region.

Belongs to the NRP synthetase family.

Heptamodular nonribosomal peptide synthetase that catalyzes the biosynthesis of malpinins, natural products that show biosurfactant activities. Malpinins are acetylated hexapeptides (Ac-D-Leu/Val-D-Arg-D-Leu/Val-L-Phe/Leu-Dhb-D-Trp) containing a non-canonical amino acid derived from dehydration of L-Trp, (Z)-dehydrobutyrine (Dhb), at position 5, as well as a C-terminal D-amino acid, D-tryptophan, that can be oxidized to kynurenine. Incorporated D-amino acids in positions 1, 3 and 4 are variable resulting in the malpinin A-congeners malpinin B to E. Both modules M1 and M3 have relaxed specificity towards aliphatic amino acids (L-Leu &gt; L-Met &gt; L/D-Val &gt; L-Cys), explaining Val at position 1 and 3 in malpinin A-congeners malpinin B to D. The incorporation of L-Leu, but not N-acetyl-L-Leu by module 1 suggests the N-terminal acetylation occurs at a later stage of biosynthesis. Similar to M1 and M3, M4 has a broad substrate spectrum showing the highest activity with L-Phe followed by other hydrophobic amino acids (L-Phe &gt; L-Met = L-Trp). In contrast, M2, M5 and M6 are highly specific for L-Arg, L-Thr, and L-Trp, respectively. Solely, M7 converted its preferred substrate (L-Phe) with a 15 000-fold reduced turnover rate compared to the most active module M6, indicating that its A domain cannot contribute to the malpinin biosynthesis due to low activity. Since the last T domain in malA is apparently not loaded with an amino acid, either the TE domain must offload the oligopeptide from the preceding T domain or the dual E/C domain of M7 must transfer the final peptide chain to the free acceptor T domain of M7 prior to release. The polypeptide is Malpinin synthetase (Mortierella alpina (Oleaginous fungus)).